Here is a 117-residue protein sequence, read N- to C-terminus: Swarming motility protein SwrAA (117 aa).

The protein resides in the cytoplasm. Its function is as follows. Required for swarm cell differentiation. Plays a crucial role in regulating the degree of cell flagellation. The chain is Swarming motility protein SwrAA (swrAA) from Bacillus subtilis (strain 168).